We begin with the raw amino-acid sequence, 375 residues long: Ribosomal RNA large subunit methyltransferase F (375 aa).

2 disordered regions span residues 1–39 and 262–281; these read MKNN…AAVK and NQRK…GKPT. Residues 27-38 are compositionally biased toward basic residues; it reads AKPKRVKKKAAV.

Belongs to the methyltransferase superfamily. METTL16/RlmF family.

It is found in the cytoplasm. It catalyses the reaction adenosine(1618) in 23S rRNA + S-adenosyl-L-methionine = N(6)-methyladenosine(1618) in 23S rRNA + S-adenosyl-L-homocysteine + H(+). Functionally, specifically methylates the adenine in position 1618 of 23S rRNA. The sequence is that of Ribosomal RNA large subunit methyltransferase F from Vibrio parahaemolyticus serotype O3:K6 (strain RIMD 2210633).